We begin with the raw amino-acid sequence, 950 residues long: Protocadherin alpha-13 (950 aa).

Positions 1-29 (MLSSWQGGPRPRQLLLWLLILAAWETGSG) are cleaved as a signal peptide. The Extracellular portion of the chain corresponds to 30–697 (QLHYSVPEEA…GPEAALVDVN (668 aa)). 6 Cadherin domains span residues 34–133 (SVPE…PPIF), 134–242 (PESK…APEF), 243–350 (YQSV…APEV), 351–455 (TITS…APAF), 456–565 (AQPE…APAL), and 581–678 (MPRS…APQA). Asn257 and Asn265 each carry an N-linked (GlcNAc...) asparagine glycan. N-linked (GlcNAc...) asparagine glycosylation is present at Asn548. A helical transmembrane segment spans residues 698-718 (VYLIIAICAVSSLLVLTLLLY). Topologically, residues 719 to 950 (TALRCSAPPT…GNSTTDNSDQ (232 aa)) are cytoplasmic. PXXP repeat units follow at residues 734 to 737 (PGKP), 774 to 777 (PSLP), 799 to 802 (PRQP), 832 to 835 (PGGP), 873 to 876 (PGNP), and 891 to 894 (PGSP). The segment at 734–894 (PGKPTLVCSS…PDKFIIPGSP (161 aa)) is 6 X 4 AA repeats of P-X-X-P. Disordered regions lie at residues 774-808 (PSLP…DWRY) and 827-950 (ILRA…NSDQ). Residues 787–800 (GQREEDSEGLKEPR) are compositionally biased toward basic and acidic residues. A compositionally biased stretch (basic and acidic residues) spans 909-923 (DKSDFITFGKKEETK).

It localises to the cell membrane. In terms of biological role, potential calcium-dependent cell-adhesion protein. May be involved in the establishment and maintenance of specific neuronal connections in the brain. In Pan troglodytes (Chimpanzee), this protein is Protocadherin alpha-13 (PCDHA13).